A 445-amino-acid chain; its full sequence is Phosphoglucosamine mutase (445 aa).

Residue serine 99 is the Phosphoserine intermediate of the active site. Positions 99, 242, 244, and 246 each coordinate Mg(2+). Serine 99 is subject to Phosphoserine.

Belongs to the phosphohexose mutase family. Mg(2+) serves as cofactor. In terms of processing, activated by phosphorylation.

It carries out the reaction alpha-D-glucosamine 1-phosphate = D-glucosamine 6-phosphate. In terms of biological role, catalyzes the conversion of glucosamine-6-phosphate to glucosamine-1-phosphate. The protein is Phosphoglucosamine mutase of Campylobacter jejuni subsp. jejuni serotype O:6 (strain 81116 / NCTC 11828).